The primary structure comprises 916 residues: Probable dipeptidyl-aminopeptidase B (916 aa).

2 disordered regions span residues 1-35 (MGRTGDLENAEFFPMTRRRSTSGTSSRSSTDSGLS) and 67-86 (DAEADVDEPFLPTSSKKLGS). The Cytoplasmic portion of the chain corresponds to 1–92 (MGRTGDLENA…KLGSGSRTRQ (92 aa)). Residues 21 to 35 (TSGTSSRSSTDSGLS) are compositionally biased toward low complexity. Residues 93-113 (IFWALVILCLGGWVLALVLFL) traverse the membrane as a helical; Signal-anchor for type II membrane protein segment. Topologically, residues 114 to 916 (THGRASSQTA…VKRSVPAFAH (803 aa)) are vacuolar. Asn349 and Asn640 each carry an N-linked (GlcNAc...) asparagine glycan. Ser754 serves as the catalytic Charge relay system. 2 N-linked (GlcNAc...) asparagine glycosylation sites follow: Asn808 and Asn813. Active-site charge relay system residues include Asp831 and His864.

It belongs to the peptidase S9B family.

It localises to the vacuole membrane. It catalyses the reaction Release of an N-terminal dipeptide, Xaa-Yaa-|-Zaa-, from a polypeptide, preferentially when Yaa is Pro, provided Zaa is neither Pro nor hydroxyproline.. Its function is as follows. Type IV dipeptidyl-peptidase which removes N-terminal dipeptides sequentially from polypeptides having unsubstituted N-termini provided that the penultimate residue is proline. The sequence is that of Probable dipeptidyl-aminopeptidase B (dapB) from Aspergillus flavus (strain ATCC 200026 / FGSC A1120 / IAM 13836 / NRRL 3357 / JCM 12722 / SRRC 167).